The sequence spans 68 residues: Pleurocidin (68 aa).

An N-terminal signal peptide occupies residues 1-22; it reads MKFTATFLMIAIFVLMVEPGEC. Residues 48–68 constitute a propeptide that is removed on maturation; sequence GDKQELNKRAVDEDPNVIVFE.

This sequence belongs to the pleurocidin family. Goblet cells.

The protein localises to the secreted. In terms of biological role, antimicrobial peptide with potent activity against Gram-positive and Gram-negative bacteria. Activity against E.coli and B.subtilis. Weaker activity against L.mucor, s.marcescens and P.aeruginosa. May play a role in innate host defense. The protein is Pleurocidin (ple2) of Pseudopleuronectes americanus (Winter flounder).